The chain runs to 519 residues: Xylose import ATP-binding protein XylG (519 aa).

2 ABC transporter domains span residues 6–245 and 262–507; these read LTMR…VGRE and LDVR…LKPA. 38-45 contributes to the ATP binding site; the sequence is GENGAGKS.

The protein belongs to the ABC transporter superfamily. Xylose importer (TC 3.A.1.2.4) family. In terms of assembly, the complex is composed of two ATP-binding proteins (XylG), two transmembrane proteins (XylH) and a solute-binding protein (XylF).

It localises to the cell inner membrane. It catalyses the reaction D-xylose(out) + ATP + H2O = D-xylose(in) + ADP + phosphate + H(+). Part of the ABC transporter complex XylFGH involved in xylose import. Responsible for energy coupling to the transport system. The polypeptide is Xylose import ATP-binding protein XylG (Burkholderia cenocepacia (strain HI2424)).